Consider the following 348-residue polypeptide: Lipoyl synthase, mitochondrial (348 aa).

[4Fe-4S] cluster is bound by residues Cys105, Cys110, Cys116, Cys136, Cys140, and Cys143. In terms of domain architecture, Radical SAM core spans 121–341 (ETGTATATIM…RTXXLVSYVL (221 aa)).

Belongs to the radical SAM superfamily. Lipoyl synthase family. It depends on [4Fe-4S] cluster as a cofactor.

Its subcellular location is the mitochondrion. It catalyses the reaction [[Fe-S] cluster scaffold protein carrying a second [4Fe-4S](2+) cluster] + N(6)-octanoyl-L-lysyl-[protein] + 2 oxidized [2Fe-2S]-[ferredoxin] + 2 S-adenosyl-L-methionine + 4 H(+) = [[Fe-S] cluster scaffold protein] + N(6)-[(R)-dihydrolipoyl]-L-lysyl-[protein] + 4 Fe(3+) + 2 hydrogen sulfide + 2 5'-deoxyadenosine + 2 L-methionine + 2 reduced [2Fe-2S]-[ferredoxin]. It participates in protein modification; protein lipoylation via endogenous pathway; protein N(6)-(lipoyl)lysine from octanoyl-[acyl-carrier-protein]: step 2/2. Functionally, catalyzes the radical-mediated insertion of two sulfur atoms into the C-6 and C-8 positions of the octanoyl moiety bound to the lipoyl domains of lipoate-dependent enzymes, thereby converting the octanoylated domains into lipoylated derivatives. The protein is Lipoyl synthase, mitochondrial (LIP1) of Ricinus communis (Castor bean).